Reading from the N-terminus, the 87-residue chain is Small ribosomal subunit protein uS15c (87 aa).

The protein belongs to the universal ribosomal protein uS15 family. In terms of assembly, part of the 30S ribosomal subunit.

Its subcellular location is the plastid. The protein localises to the chloroplast. This chain is Small ribosomal subunit protein uS15c (rps15), found in Solanum tuberosum (Potato).